An 89-amino-acid chain; its full sequence is Small ribosomal subunit protein uS15 (89 aa).

Positions 1-21 (MALSPEKKNEIIENFKTHEGD) are enriched in basic and acidic residues. A disordered region spans residues 1–23 (MALSPEKKNEIIENFKTHEGDTG).

The protein belongs to the universal ribosomal protein uS15 family. In terms of assembly, part of the 30S ribosomal subunit. Forms a bridge to the 50S subunit in the 70S ribosome, contacting the 23S rRNA.

Its function is as follows. One of the primary rRNA binding proteins, it binds directly to 16S rRNA where it helps nucleate assembly of the platform of the 30S subunit by binding and bridging several RNA helices of the 16S rRNA. Forms an intersubunit bridge (bridge B4) with the 23S rRNA of the 50S subunit in the ribosome. The polypeptide is Small ribosomal subunit protein uS15 (Desulforamulus reducens (strain ATCC BAA-1160 / DSM 100696 / MI-1) (Desulfotomaculum reducens)).